A 576-amino-acid chain; its full sequence is Hemagglutinin-neuraminidase (576 aa).

The span at 1-10 (MDGDRGKRDS) shows a compositional bias: basic and acidic residues. A disordered region spans residues 1 to 24 (MDGDRGKRDSYWSTSPSGSTTKLA). The Intravirion portion of the chain corresponds to 1–37 (MDGDRGKRDSYWSTSPSGSTTKLASGWERSSKVDTWL). The tract at residues 10–14 (SYWST) is incorporation in virion. Residues 11-23 (YWSTSPSGSTTKL) are compositionally biased toward polar residues. The chain crosses the membrane as a helical span at residues 38-58 (LILSFTQWALSIATVIICIII). The tract at residues 59–140 (SARQGYSTKE…RQELTQLCES (82 aa)) is involved in interaction with F protein. The Virion surface portion of the chain corresponds to 59–576 (SARQGYSTKE…SIPKLCKAES (518 aa)). The N-linked (GlcNAc...) asparagine; by host glycan is linked to N77. Intrachain disulfides connect C192/C216, C258/C271, C357/C469, and C463/C473. The interval 254–259 (NRKSCS) is involved in neuraminidase activity. N-linked (GlcNAc...) asparagine; by host glycans are attached at residues N499 and N511. C536 and C545 are joined by a disulfide.

This sequence belongs to the paramyxoviruses hemagglutinin-neuraminidase family. As to quaternary structure, homotetramer; composed of disulfide-linked homodimers. Interacts with F protein trimer. In terms of processing, N-glycosylated; glycans consist of a mixture of high mannose-type oligosaccharides and of complex-type oligosaccharides.

It localises to the virion membrane. Its subcellular location is the host cell membrane. It catalyses the reaction Hydrolysis of alpha-(2-&gt;3)-, alpha-(2-&gt;6)-, alpha-(2-&gt;8)- glycosidic linkages of terminal sialic acid residues in oligosaccharides, glycoproteins, glycolipids, colominic acid and synthetic substrates.. Its function is as follows. Attaches the virus to sialic acid-containing cell receptors and thereby initiating infection. Binding of HN protein to the receptor induces a conformational change that allows the F protein to trigger virion/cell membranes fusion. In terms of biological role, neuraminidase activity ensures the efficient spread of the virus by dissociating the mature virions from the neuraminic acid containing glycoproteins. In Sendai virus (strain Harris) (SeV), this protein is Hemagglutinin-neuraminidase (HN).